The sequence spans 194 residues: Flavin prenyltransferase UbiX (194 aa).

Residues 9–11 (GAS), Ser-35, 86–89 (SIKT), and Arg-121 each bind FMN. 2 residues coordinate dimethylallyl phosphate: Tyr-151 and Lys-167.

Belongs to the UbiX/PAD1 family.

It carries out the reaction dimethylallyl phosphate + FMNH2 = prenylated FMNH2 + phosphate. In terms of biological role, involved in the carboxylation of phenylphosphate. Functionally, flavin prenyltransferase that catalyzes the synthesis of the prenylated FMN cofactor (prenyl-FMN) for 4-hydroxy-3-polyprenylbenzoic acid decarboxylase UbiD. The prenyltransferase is metal-independent and links a dimethylallyl moiety from dimethylallyl monophosphate (DMAP) to the flavin N5 and C6 atoms of FMN. This is Flavin prenyltransferase UbiX from Thauera aromatica.